Here is a 411-residue protein sequence, read N- to C-terminus: ATP-dependent Clp protease ATP-binding subunit ClpX (411 aa).

One can recognise a ClpX-type ZB domain in the interval 1 to 51; sequence MAKKKDEEYCSFCGMPRTQVNLMLEGVHAHICDECALRAGEVVREALQKFK. Zn(2+)-binding residues include Cys10, Cys13, Cys32, and Cys35. 119–126 lines the ATP pocket; that stretch reads PTGTGKTL.

The protein belongs to the ClpX chaperone family. In terms of assembly, component of the ClpX-ClpP complex. Forms a hexameric ring that, in the presence of ATP, binds to fourteen ClpP subunits assembled into a disk-like structure with a central cavity, resembling the structure of eukaryotic proteasomes.

Its function is as follows. ATP-dependent specificity component of the Clp protease. It directs the protease to specific substrates. Can perform chaperone functions in the absence of ClpP. The sequence is that of ATP-dependent Clp protease ATP-binding subunit ClpX from Porphyromonas gingivalis (strain ATCC 33277 / DSM 20709 / CIP 103683 / JCM 12257 / NCTC 11834 / 2561).